The primary structure comprises 701 residues: Arachidonate 12-lipoxygenase, 12R-type (701 aa).

The 118-residue stretch at 2 to 119 folds into the PLAT domain; the sequence is ATYKVKVATG…TLALREATGK (118 aa). In terms of domain architecture, Lipoxygenase spans 120-701; it reads ITADDTLPIL…PVLIENSISI (582 aa). 5 residues coordinate Fe cation: His398, His403, His578, Asn582, and Ile701.

It belongs to the lipoxygenase family. The cofactor is Fe cation. Expressed in skin epidermis and other stratified epithelia including tongue and forestomach. Low levels of expression are found in trachea, brain and lung. Not expressed in intestine, liver, kidney, adipose tissue, muscle or hematopoietic cells.

The protein resides in the cytoplasm. It localises to the perinuclear region. It carries out the reaction 1-O-methyl-(5Z,8Z,11Z,14Z)-eicosatetraenoate + O2 = 1-O-methyl (5Z,8Z,10E,12R,14Z)-hydroperoxyiecosatetraenoate. It catalyses the reaction 1-O-methyl-(5Z,8Z,11Z,14Z)-eicosatetraenoate + O2 = 1-O-methyl-8-hydroperoxy-(5Z,9E,11Z,14Z)-eicosatetraenoate. The catalysed reaction is (5Z,8Z,11Z,14Z)-eicosatetraenoate + O2 = (12R)-hydroperoxy-(5Z,8Z,10E,14Z)-eicosatetraenoate. The enzyme catalyses N-[omega-(9Z,12Z)-octadecadienoyloxy]acyl-beta-D-glucosyl-(1&lt;-&gt;1)-octadecasphing-4E-enine + O2 = N-[omega-(9R)-hydroperoxy-(10E,12Z)-octadecadienoyloxy]acyl-beta-D-glucosyl-(1&lt;-&gt;1)-octadecasphing-4E-enine. It carries out the reaction a N-[omega-(9Z,12Z)-octadecadienoyloxy]-acylsphin-4E-enine + O2 = a N-[omega-(9R)-hydroperoxy-(10E,12Z)-octadecadienoyloxy]-acylsphin-4E-enine. It catalyses the reaction (6Z,9Z,12Z)-octadecatrienoate + O2 = 10-hydroperoxy-(6Z,8E,12Z)-octadecatrienoate. The catalysed reaction is (4Z,7Z,10Z,13Z,16Z,19Z)-docosahexaenoate + O2 = 14-hydroperoxy-(4Z,7Z,10Z,12E,16Z,19Z)-docosahexaenoate. The enzyme catalyses (8Z,11Z,14Z)-eicosatrienoate + O2 = (8Z,10E,14Z)-12-hydroperoxyeicosatrienoate. It carries out the reaction (5Z,8Z,11Z,14Z,17Z)-eicosapentaenoate + O2 = (5Z,7Z,8Z,10E,14Z,17Z)-12-hydroperoxyeicosapentaenoate. It catalyses the reaction (6Z,9Z,12Z)-octadecatrienoate + O2 = 10R-hydroperoxy-(6Z,8E,12Z)-octadecatrienoate. The catalysed reaction is 1-O-methyl-(5Z,8Z,11Z,14Z)-eicosatetraenoate + O2 = 1-O-methyl-(8R)-hydroperoxy-(5Z,9E,11Z,14Z)-eicosatrienoate. The enzyme catalyses 1-O-methyl-(9Z,12Z)-octadecadienoate + O2 = 1-O-methyl-(9R)-hydroperoxy-(10E,12Z)-octadecadienoate. It carries out the reaction 1-O-methyl-20-hydroxy-(5Z,8Z,11Z,14Z)-eicosatetraenoate + O2 = 1-O-methyl-8-hydroperoxy-20-hydroxy-(5Z,9E,11Z,14Z)-eicosatetraenoate. It catalyses the reaction 1-O-methyl-20-hydroxy-(5Z,8Z,11Z,14Z)-eicosatetraenoate + O2 = 1-O-methyl-12-hydroperoxy-20-hydroxy-(5Z,8Z,10E,14Z)-eicosatetraenoate. The catalysed reaction is 1-O-methyl-20-hydroxy-(5Z,8Z,11Z,14Z)-eicosatetraenoate + O2 = 1-O-methyl-9-hydroperoxy-20-hydroxy-(5Z,7E,11Z,14Z)-eicosatetraenoate. The enzyme catalyses 1-O-methyl-(9Z,12Z)-octadecadienoate + O2 = 1-O-methyl-(13S)-hydroperoxy-(9Z,11E)-octadecadienoate. It participates in lipid metabolism; hydroperoxy eicosatetraenoic acid biosynthesis. Its pathway is lipid metabolism; sphingolipid metabolism. Its activity is regulated as follows. Increased by calcium. In terms of biological role, catalyzes the regio and stereo-specific incorporation of a single molecule of dioxygen into free and esterified polyunsaturated fatty acids generating lipid hydroperoxides that can be further reduced to the corresponding hydroxy species. Does not convert arachidonic acid to (12R)-hydroperoxyeicosatetraenoic acid/(12R)-HPETE. In the skin, acts upstream of ALOXE3 on the lineolate moiety of esterified omega-hydroxyacyl-sphingosine (EOS) ceramides to produce an epoxy-ketone derivative, a crucial step in the conjugation of omega-hydroxyceramide to membrane proteins. Therefore plays a crucial role in the synthesis of corneocytes lipid envelope and the establishment of the skin barrier to water loss. May also play a role in the regulation of the expression of airway mucins. The sequence is that of Arachidonate 12-lipoxygenase, 12R-type from Mus musculus (Mouse).